The primary structure comprises 239 residues: MATPHINAEMGDFADVVLMPGDPLRANSIAETFLEDAREVNNVRGMLGFTGTYKGRRKISVMGHGMGIPSCSIYTKELITDFGVKKIIRVGSCGAVREDVKLREVVIGHGACTDSKVNRLRFKDHDFPAIADFGMVRNAVDAKALGVEARRSNIFSADLFYTPDPSMFDVMEKYGILGVEMEAAGIYGVAAEFGAKALTICTVSDHIRTHEQTIAAERQTTFNDMIKIALESVLLRDKE.

Histidine 5 contacts a purine D-ribonucleoside. Phosphate-binding positions include glycine 21, arginine 25, arginine 44, and 89-92 (RVGS). A purine D-ribonucleoside-binding positions include 180–182 (EME) and 204–205 (SD). Aspartate 205 functions as the Proton donor in the catalytic mechanism.

The protein belongs to the PNP/UDP phosphorylase family. As to quaternary structure, homohexamer; trimer of homodimers.

The catalysed reaction is a purine D-ribonucleoside + phosphate = a purine nucleobase + alpha-D-ribose 1-phosphate. It carries out the reaction a purine 2'-deoxy-D-ribonucleoside + phosphate = a purine nucleobase + 2-deoxy-alpha-D-ribose 1-phosphate. In terms of biological role, catalyzes the reversible phosphorolytic breakdown of the N-glycosidic bond in the beta-(deoxy)ribonucleoside molecules, with the formation of the corresponding free purine bases and pentose-1-phosphate. The sequence is that of Purine nucleoside phosphorylase DeoD-type from Klebsiella pneumoniae.